Reading from the N-terminus, the 354-residue chain is MLFNLRILLNNAAFRNGHNFMVRNFRCGQPLQNKVQLKGRDLLTLKNFTGEEIKYMLWLSADLKFRIKQKGEYLPLLQGKSLGMIFEKRSTRTRLSTETGFALLGGHPCFLTTQDIHLGVNESLTDTARVLSSMADAVLARVYKQSDLDTLAKEASIPIINGLSDLYHPIQILADYLTLQEHYSSLKGLTLSWIGDGNNILHSIMMSAAKFGMHLQAATPKGYEPDASVTKLAEQYAKENGTKLLLTNDPLEAAHGGNVLITDTWISMGQEEEKKKRLQAFQGYQVTMKTAKVAASDWTFLHCLPRKPEEVDDEVFYSPRSLVFPEAENRKWTIMAVMVSLLTDYSPQLQKPKF.

The transit peptide at 1-32 directs the protein to the mitochondrion; it reads MLFNLRILLNNAAFRNGHNFMVRNFRCGQPLQ. Position 70 is an N6-acetyllysine; alternate (Lys70). Residue Lys70 is modified to N6-succinyllysine; alternate. Lys80 carries the N6-succinyllysine modification. Lys88 bears the N6-acetyllysine; alternate mark. Lys88 bears the N6-succinyllysine; alternate mark. Residue 90–93 coordinates carbamoyl phosphate; sequence STRT. Phosphoserine is present on Ser133. A carbamoyl phosphate-binding site is contributed by Arg141. Residue Lys144 is modified to N6-acetyllysine; alternate. Lys144 is modified (N6-succinyllysine; alternate). Positions 168 and 171 each coordinate carbamoyl phosphate. Asn199 is an L-ornithine binding site. N6-acetyllysine; alternate is present on residues Lys221, Lys231, and Lys238. Residues Lys221, Lys231, and Lys238 each carry the N6-succinyllysine; alternate modification. Lys243 is modified (N6-acetyllysine). 3 residues coordinate L-ornithine: Asp263, Ser267, and Met268. 2 positions are modified to N6-succinyllysine: Lys274 and Lys289. An N6-acetyllysine; alternate modification is found at Lys292. N6-succinyllysine; alternate is present on Lys292. The active-site Proton acceptor is the Cys303. Carbamoyl phosphate is bound at residue 303 to 304; sequence CL. Lys307 bears the N6-acetyllysine; alternate mark. Lys307 is modified (N6-succinyllysine; alternate). A carbamoyl phosphate-binding site is contributed by Arg330.

The protein belongs to the aspartate/ornithine carbamoyltransferase superfamily. OTCase family. In terms of assembly, homotrimer. Post-translationally, acetylation at Lys-88 negatively regulates ornithine carbamoyltransferase activity in response to nutrient signals. In terms of tissue distribution, mainly expressed in liver and intestinal mucosa.

The protein localises to the mitochondrion matrix. It carries out the reaction carbamoyl phosphate + L-ornithine = L-citrulline + phosphate + H(+). The protein operates within nitrogen metabolism; urea cycle; L-citrulline from L-ornithine and carbamoyl phosphate: step 1/1. With respect to regulation, negatively regulated by lysine acetylation. In terms of biological role, catalyzes the second step of the urea cycle, the condensation of carbamoyl phosphate with L-ornithine to form L-citrulline. The urea cycle ensures the detoxification of ammonia by converting it to urea for excretion. The protein is Ornithine transcarbamylase, mitochondrial of Homo sapiens (Human).